Here is a 1288-residue protein sequence, read N- to C-terminus: Symplekin (1288 aa).

The interval 1–124 (MASSSGDSVT…NMLLRDENVN (124 aa)) is interaction with HSF1. Residue S13 is modified to Phosphoserine. 5 HEAT repeats span residues 31-64 (TTSE…LIIN), 67-101 (PTLL…EACK), 104-146 (IELL…WMVK), 153-192 (LQEA…GLIV), and 227-266 (VLWE…IARQ). Positions 335-392 (IARNMPSSKDSRKRPRDDTDSTLKKMKLEPNLGEDDEDKDLEPGPSGTSKASAQISGQ) are disordered. A Nuclear localization signal motif is present at residues 345-360 (SRKRPRDDTDSTLKKM). A compositionally biased stretch (basic and acidic residues) spans 349–362 (PRDDTDSTLKKMKL). Residue K361 forms a Glycyl lysine isopeptide (Lys-Gly) (interchain with G-Cter in SUMO1); alternate linkage. Residue K361 forms a Glycyl lysine isopeptide (Lys-Gly) (interchain with G-Cter in SUMO2); alternate linkage. Over residues 380–392 (SGTSKASAQISGQ) the composition is skewed to polar residues. A Glycyl lysine isopeptide (Lys-Gly) (interchain with G-Cter in SUMO2) cross-link involves residue K483. Phosphoserine is present on S494. Disordered stretches follow at residues 1130–1151 (PAPA…PPQD) and 1163–1288 (LKRQ…KGNS). Residues 1131-1149 (APAPAPAPAPAPAPAPRPP) show a composition bias toward pro residues. Positions 1163 to 1173 (LKRQLEEEQKQ) are enriched in basic and acidic residues. 2 positions are modified to phosphoserine: S1238 and S1239. K1256 is covalently cross-linked (Glycyl lysine isopeptide (Lys-Gly) (interchain with G-Cter in SUMO1)). S1260 is subject to Phosphoserine. The segment covering 1267 to 1288 (AVEEALKTSSPETREPESKGNS) has biased composition (basic and acidic residues). T1274 is subject to Phosphothreonine. S1276 is modified (phosphoserine).

It belongs to the Symplekin family. In terms of assembly, found in a heat-sensitive complex at least composed of several cleavage and polyadenylation specific and cleavage stimulation factors. Interacts with CPSF2, CPSF3 and CSTF2. Interacts (via N-terminus) with HSF1; this interaction is direct and occurs upon heat shock. Interacts with SSU72.

It localises to the cytoplasm. Its subcellular location is the cytoskeleton. The protein localises to the cell junction. The protein resides in the tight junction. It is found in the cell membrane. It localises to the nucleus. Its subcellular location is the nucleoplasm. Scaffold protein that functions as a component of a multimolecular complex involved in histone mRNA 3'-end processing. Specific component of the tight junction (TJ) plaque, but might not be an exclusively junctional component. May have a house-keeping rule. Is involved in pre-mRNA polyadenylation. Enhances SSU72 phosphatase activity. The protein is Symplekin (Sympk) of Mus musculus (Mouse).